Here is a 1669-residue protein sequence, read N- to C-terminus: Collagen alpha-1(IV) chain (1669 aa).

The N-terminal stretch at 1–27 (MGPRLGVWLLLLLAALLLHEESSRAAA) is a signal peptide. The propeptide at 28-172 (KGGCAGSGCG…LGHIPGTLLK (145 aa)) is N-terminal propeptide (7S domain). The interval 50–1445 (ERGLPGLQGV…PPGTPSVDHG (1396 aa)) is disordered. The interval 173 to 1440 (GERGYPGQPG…PGSMGPPGTP (1268 aa)) is triple-helical region. Pro residues predominate over residues 196–214 (VGPPGFTGPPGPPGPPGPP). Residues P204, P207, and P210 each carry the 3-hydroxyproline modification. 2 stretches are compositionally biased toward basic and acidic residues: residues 254–263 (TAMRGEKGQK) and 289–298 (PGKDGEKGEK). The span at 347-356 (GYPGGPGAKG) shows a compositional bias: gly residues. The segment covering 357–366 (ETGPKGFPGI) has biased composition (low complexity). The span at 367–376 (PGQPGPPGFP) shows a compositional bias: pro residues. Residues 396–412 (PGLPGVSLPGPSGRDGL) show a composition bias toward low complexity. Pro residues-rich tracts occupy residues 413-424 (PGPPGPPGPPGQ) and 436-448 (PGPP…PGIP). The segment covering 485-494 (PGEIGFPGQP) has biased composition (low complexity). Composition is skewed to basic and acidic residues over residues 497-508 (KGDRGLPGRDGL) and 535-545 (FDIRLKGDKGD). The span at 586-595 (GPPGGVGFPG) shows a compositional bias: gly residues. 3-hydroxyproline occurs at positions 587 and 602. Residue P603 is modified to 4-hydroxyproline. P605 carries the 3-hydroxyproline modification. P606, P623, P626, P629, and P632 each carry 4-hydroxyproline. A 3-hydroxyproline modification is found at P647. Gly residues-rich tracts occupy residues 758–767 (GNVGGPGIPG) and 797–817 (GVPG…GPPG). Low complexity predominate over residues 847-871 (SQGLPGLTGQSGLPGLPGQQGTPGQ). Basic and acidic residues predominate over residues 937 to 955 (SMDKVDMGSMKGEKGDQGE). Residues 1011–1020 (GSAGGMGLPG) show a composition bias toward gly residues. Low complexity-rich tracts occupy residues 1030–1040 (IPGPQGIPGLP), 1101–1114 (SPGS…PGLP), and 1193–1212 (FPGL…QGFM). P1214 carries the 3-hydroxyproline modification. Positions 1247–1258 (PGRPGPMGPPGL) are enriched in pro residues. The span at 1290–1299 (GMPGIGGSPG) shows a compositional bias: gly residues. Positions 1413–1428 (FGPPGPRGFPGPPGPD) are enriched in pro residues. The residue at position 1424 (P1424) is a 3-hydroxyproline. A Collagen IV NC1 domain is found at 1445–1669 (GFLVTRHSQT…SRCQVCMRRT (225 aa)). 6 cysteine pairs are disulfide-bonded: C1460–C1551, C1493–C1548, C1505–C1511, C1570–C1665, C1604–C1662, and C1616–C1622. M1533 is covalently cross-linked (S-Lysyl-methionine sulfilimine (Met-Lys) (interchain with K-1651)). Residue K1651 forms an S-Lysyl-methionine sulfilimine (Lys-Met) (interchain with M-1533) linkage.

The protein belongs to the type IV collagen family. As to quaternary structure, there are six type IV collagen isoforms, alpha 1(IV)-alpha 6(IV), each of which can form a triple helix structure with 2 other chains to generate type IV collagen network. Interacts with EFEMP2. Lysines at the third position of the tripeptide repeating unit (G-X-Y) are hydroxylated in all cases. The modified lysines can be O-glycosylated. Post-translationally, contains 4-hydroxyproline. Prolines at the third position of the tripeptide repeating unit (G-X-Y) are hydroxylated in some or all of the chains. In terms of processing, contains 3-hydroxyproline. This modification occurs on the first proline residue in the sequence motif Gly-Pro-Hyp, where Hyp is 4-hydroxyproline. Type IV collagens contain numerous cysteine residues which are involved in inter- and intramolecular disulfide bonding. 12 of these, located in the NC1 domain, are conserved in all known type IV collagens. Post-translationally, the trimeric structure of the NC1 domains is stabilized by covalent bonds (sulfilimine cross-links) between Lys and Met residues. These cross-links are important for the mechanical stability of the basement membrane. Sulfilimine cross-link is catalyzed by PXDN. In terms of processing, proteolytic processing produces the C-terminal NC1 peptide, arresten.

It localises to the secreted. It is found in the extracellular space. The protein resides in the extracellular matrix. The protein localises to the basement membrane. Type IV collagen is the major structural component of glomerular basement membranes (GBM), forming a 'chicken-wire' meshwork together with laminins, proteoglycans and entactin/nidogen. Its function is as follows. Arresten, comprising the C-terminal NC1 domain, inhibits angiogenesis and tumor formation. The C-terminal half is found to possess the anti-angiogenic activity. Specifically inhibits endothelial cell proliferation, migration and tube formation. In Bos taurus (Bovine), this protein is Collagen alpha-1(IV) chain.